Here is a 424-residue protein sequence, read N- to C-terminus: Serine--tRNA ligase (424 aa).

Residue 231 to 233 (TAE) coordinates L-serine. An ATP-binding site is contributed by 262–264 (RSE). Residue glutamate 285 participates in L-serine binding. Position 349-352 (349-352 (EISS)) interacts with ATP. L-serine is bound at residue serine 385.

This sequence belongs to the class-II aminoacyl-tRNA synthetase family. Type-1 seryl-tRNA synthetase subfamily. As to quaternary structure, homodimer. The tRNA molecule binds across the dimer.

It is found in the cytoplasm. The catalysed reaction is tRNA(Ser) + L-serine + ATP = L-seryl-tRNA(Ser) + AMP + diphosphate + H(+). The enzyme catalyses tRNA(Sec) + L-serine + ATP = L-seryl-tRNA(Sec) + AMP + diphosphate + H(+). The protein operates within aminoacyl-tRNA biosynthesis; selenocysteinyl-tRNA(Sec) biosynthesis; L-seryl-tRNA(Sec) from L-serine and tRNA(Sec): step 1/1. Catalyzes the attachment of serine to tRNA(Ser). Is also able to aminoacylate tRNA(Sec) with serine, to form the misacylated tRNA L-seryl-tRNA(Sec), which will be further converted into selenocysteinyl-tRNA(Sec). This chain is Serine--tRNA ligase, found in Bacillus cytotoxicus (strain DSM 22905 / CIP 110041 / 391-98 / NVH 391-98).